The chain runs to 121 residues: Large ribosomal subunit protein bL19 (121 aa).

It belongs to the bacterial ribosomal protein bL19 family.

Its function is as follows. This protein is located at the 30S-50S ribosomal subunit interface and may play a role in the structure and function of the aminoacyl-tRNA binding site. This is Large ribosomal subunit protein bL19 from Polaromonas sp. (strain JS666 / ATCC BAA-500).